The following is a 485-amino-acid chain: Poly(ADP-ribose) glycohydrolase 2 (485 aa).

It belongs to the poly(ADP-ribose) glycohydrolase family. Expressed in head and tail neurons.

The protein resides in the cytoplasm. It catalyses the reaction [(1''-&gt;2')-ADP-alpha-D-ribose](n) + H2O = [(1''-&gt;2')-ADP-alpha-D-ribose](n-1) + ADP-D-ribose. Its function is as follows. Poly(ADP-ribose) synthesized after DNA damage is only present transiently and is rapidly degraded by poly(ADP-ribose) glycohydrolase. Poly(ADP-ribose) metabolism may be required for maintenance of the normal function of neuronal cells. This Caenorhabditis elegans protein is Poly(ADP-ribose) glycohydrolase 2.